We begin with the raw amino-acid sequence, 100 residues long: Urease subunit gamma (100 aa).

It belongs to the urease gamma subunit family. Heterotrimer of UreA (gamma), UreB (beta) and UreC (alpha) subunits. Three heterotrimers associate to form the active enzyme.

Its subcellular location is the cytoplasm. The catalysed reaction is urea + 2 H2O + H(+) = hydrogencarbonate + 2 NH4(+). Its pathway is nitrogen metabolism; urea degradation; CO(2) and NH(3) from urea (urease route): step 1/1. This Lysinibacillus sphaericus (strain C3-41) protein is Urease subunit gamma.